Consider the following 150-residue polypeptide: MRVVVQRVRAASVAVDGDIVGKIGTGLLVLAGFEEADSETDLDWMAGKIVRLRLFADESGVMNRNVLDAGGEVLAVSQFTLYASVKKGNRPSWSRAARGEVSQPLFERFVTKLSATLGKAVPTGVFGADMQVSLINDGPVTLTIDSKVPE.

The Gly-cisPro motif, important for rejection of L-amino acids signature appears at 138–139 (GP).

It belongs to the DTD family. As to quaternary structure, homodimer.

It is found in the cytoplasm. The enzyme catalyses glycyl-tRNA(Ala) + H2O = tRNA(Ala) + glycine + H(+). It catalyses the reaction a D-aminoacyl-tRNA + H2O = a tRNA + a D-alpha-amino acid + H(+). An aminoacyl-tRNA editing enzyme that deacylates mischarged D-aminoacyl-tRNAs. Also deacylates mischarged glycyl-tRNA(Ala), protecting cells against glycine mischarging by AlaRS. Acts via tRNA-based rather than protein-based catalysis; rejects L-amino acids rather than detecting D-amino acids in the active site. By recycling D-aminoacyl-tRNA to D-amino acids and free tRNA molecules, this enzyme counteracts the toxicity associated with the formation of D-aminoacyl-tRNA entities in vivo and helps enforce protein L-homochirality. The sequence is that of D-aminoacyl-tRNA deacylase from Dechloromonas aromatica (strain RCB).